A 363-amino-acid polypeptide reads, in one-letter code: Histidinol-phosphate aminotransferase (363 aa).

The residue at position 220 (K220) is an N6-(pyridoxal phosphate)lysine.

The protein belongs to the class-II pyridoxal-phosphate-dependent aminotransferase family. Histidinol-phosphate aminotransferase subfamily. As to quaternary structure, homodimer. Pyridoxal 5'-phosphate is required as a cofactor.

The enzyme catalyses L-histidinol phosphate + 2-oxoglutarate = 3-(imidazol-4-yl)-2-oxopropyl phosphate + L-glutamate. The protein operates within amino-acid biosynthesis; L-histidine biosynthesis; L-histidine from 5-phospho-alpha-D-ribose 1-diphosphate: step 7/9. This chain is Histidinol-phosphate aminotransferase, found in Chlorobium chlorochromatii (strain CaD3).